Here is a 334-residue protein sequence, read N- to C-terminus: Glycerol-1-phosphate dehydrogenase [NAD(P)+] (334 aa).

Residues 77–81 (GKPID) and 99–102 (TTAS) each bind NAD(+). Asp-104 lines the substrate pocket. Residue Ser-108 participates in NAD(+) binding. Asp-147 is a binding site for substrate. 2 residues coordinate Zn(2+): Asp-147 and His-225. His-229 serves as a coordination point for substrate. His-246 serves as a coordination point for Zn(2+).

It belongs to the glycerol-1-phosphate dehydrogenase family. It depends on Zn(2+) as a cofactor.

Its subcellular location is the cytoplasm. It catalyses the reaction sn-glycerol 1-phosphate + NAD(+) = dihydroxyacetone phosphate + NADH + H(+). It carries out the reaction sn-glycerol 1-phosphate + NADP(+) = dihydroxyacetone phosphate + NADPH + H(+). It functions in the pathway membrane lipid metabolism; glycerophospholipid metabolism. In terms of biological role, catalyzes the NAD(P)H-dependent reduction of dihydroxyacetonephosphate (DHAP or glycerone phosphate) to glycerol 1-phosphate (G1P). The G1P thus generated is used as the glycerophosphate backbone of phospholipids in the cellular membranes of Archaea. The chain is Glycerol-1-phosphate dehydrogenase [NAD(P)+] from Methanococcus vannielii (strain ATCC 35089 / DSM 1224 / JCM 13029 / OCM 148 / SB).